The following is a 62-amino-acid chain: Endoregulin (62 aa).

A helical membrane pass occupies residues 25 to 45; sequence LAVIILFITAVLLLILFAIVF.

In terms of assembly, homooligomer. Can also form heterooligomers with other sarcoplasmic/endoplasmic reticulum calcium ATPase (SERCA) regulators ARLN, PLN, SLN and STRIT1/DWORF. Monomer. Interacts as a monomer with ATP2A2/SERCA2; the interaction results in inhibition of ATP2A2 Ca(2+) affinity.

The protein resides in the endoplasmic reticulum membrane. Inhibits the activity of the calcium ATPases ATP2A2/SERCA2 and ATP2A3/SERCA3 by decreasing their apparent affinity for Ca(2+). The chain is Endoregulin from Homo sapiens (Human).